We begin with the raw amino-acid sequence, 415 residues long: Multidrug resistance protein MdtA (415 aa).

An N-terminal signal peptide occupies residues 1 to 21 (MKGSYKSRWVIVIVVVIAAIA). Disordered regions lie at residues 32 to 59 (SRSAAPGATKQAQQSPAGGRRGMRSGPL) and 392 to 415 (EAQSATTSEEKATSREYAKKGARS). Over residues 399 to 415 (SEEKATSREYAKKGARS) the composition is skewed to basic and acidic residues.

This sequence belongs to the membrane fusion protein (MFP) (TC 8.A.1) family. As to quaternary structure, part of a tripartite efflux system composed of MdtA, MdtB and MdtC.

Its subcellular location is the cell inner membrane. The MdtABC tripartite complex confers resistance against novobiocin and deoxycholate. In Escherichia coli O17:K52:H18 (strain UMN026 / ExPEC), this protein is Multidrug resistance protein MdtA.